Consider the following 699-residue polypeptide: Dymeclin (699 aa).

Glycine 2 is lipidated: N-myristoyl glycine. Serine 346 bears the Phosphoserine mark.

Belongs to the dymeclin family.

The polypeptide is Dymeclin (Drosophila melanogaster (Fruit fly)).